The primary structure comprises 474 residues: E3 ubiquitin-protein ligase RNF14 (474 aa).

The RWD domain occupies aspartate 11–tyrosine 137. A D-box motif is present at residues arginine 37 to asparagine 45. The tract at residues lysine 216 to leucine 457 is TRIAD supradomain. 15 residues coordinate Zn(2+): cysteine 220, cysteine 223, cysteine 238, histidine 240, cysteine 243, cysteine 246, cysteine 265, cysteine 270, cysteine 309, cysteine 314, cysteine 329, cysteine 332, cysteine 337, cysteine 340, and histidine 345. The RING-type 1 zinc finger occupies cysteine 220–cysteine 270. The segment at alanine 289–cysteine 350 adopts an IBR-type zinc-finger fold. Serine 348 bears the Phosphoserine mark. Cysteine 350 is a Zn(2+) binding site. The stretch at lysine 351 to glutamate 395 forms a coiled coil. The interval arginine 361–aspartate 474 is interaction with androgen receptor. The Zn(2+) site is built by cysteine 404 and cysteine 407. The segment at cysteine 404–cysteine 433 adopts an RING-type 2; atypical zinc-finger fold. The active site involves cysteine 417. 6 residues coordinate Zn(2+): cysteine 422, cysteine 425, cysteine 430, cysteine 433, histidine 445, and cysteine 453.

Belongs to the RBR family. RNF14 subfamily. As to quaternary structure, interacts with GCN1; interaction takes place in response to ribosome collisions and is required for ubiquitination of EEF1A1/eEF1A. Interacts with the ubiquitin-conjugating enzymes UBE2E1 and UBE2E2. Interacts with AR/androgen receptor. Interacts with TCF7/TCF1, TCF7L1/TCF3 and TCF7L2/TCF4; promoting Wnt signaling. In terms of processing, RING-type zinc finger-dependent and UBE2E2-dependent autoubiquitination. In terms of tissue distribution, widely expressed.

It localises to the cytoplasm. Its subcellular location is the nucleus. It carries out the reaction [E2 ubiquitin-conjugating enzyme]-S-ubiquitinyl-L-cysteine + [acceptor protein]-L-lysine = [E2 ubiquitin-conjugating enzyme]-L-cysteine + [acceptor protein]-N(6)-ubiquitinyl-L-lysine.. The protein operates within protein modification; protein ubiquitination. E3 ubiquitin-protein ligase that plays a key role in the RNF14-RNF25 translation quality control pathway, a pathway that takes place when a ribosome has stalled during translation, and which promotes ubiquitination and degradation of translation factors on stalled ribosomes. Recruited to stalled ribosomes by the ribosome collision sensor GCN1 and mediates 'Lys-6'-linked ubiquitination of target proteins, leading to their degradation. Mediates ubiquitination of EEF1A1/eEF1A and ETF1/eRF1 translation factors on stalled ribosomes, leading to their degradation. Also catalyzes ubiquitination of ribosomal proteins RPL0, RPL1, RPL12, RPS13 and RPS17. Specifically required to resolve RNA-protein cross-links caused by reactive aldehydes, which trigger translation stress by stalling ribosomes: acts by catalying 'Lys-6'-linked ubiquitination of RNA-protein cross-links, leading to their removal by the ATP-dependent unfoldase VCP and subsequent degradation by the proteasome. Independently of its function in the response to stalled ribosomes, acts as a regulator of transcription in Wnt signaling via its interaction with TCF transcription factors (TCF7/TCF1, TCF7L1/TCF3 and TCF7L2/TCF4). May also play a role as a coactivator for androgen- and, to a lesser extent, progesterone-dependent transcription. The polypeptide is E3 ubiquitin-protein ligase RNF14 (Homo sapiens (Human)).